Reading from the N-terminus, the 102-residue chain is Small ribosomal subunit protein uS10 (102 aa).

This sequence belongs to the universal ribosomal protein uS10 family. In terms of assembly, part of the 30S ribosomal subunit.

Functionally, involved in the binding of tRNA to the ribosomes. In Micrococcus luteus (strain ATCC 4698 / DSM 20030 / JCM 1464 / CCM 169 / CCUG 5858 / IAM 1056 / NBRC 3333 / NCIMB 9278 / NCTC 2665 / VKM Ac-2230) (Micrococcus lysodeikticus), this protein is Small ribosomal subunit protein uS10.